We begin with the raw amino-acid sequence, 79 residues long: Aquaporin Z (79 aa).

Helical transmembrane passes span 4–24 (LFAE…SAVF) and 33–53 (IGFA…AYAV). An NPA 1 motif is present at residues 62–64 (NPA).

It belongs to the MIP/aquaporin (TC 1.A.8) family. As to quaternary structure, homotetramer.

It localises to the cell membrane. It carries out the reaction H2O(in) = H2O(out). Functionally, channel that permits osmotically driven movement of water in both directions. It is involved in the osmoregulation and in the maintenance of cell turgor during volume expansion in rapidly growing cells. It mediates rapid entry or exit of water in response to abrupt changes in osmolarity. The sequence is that of Aquaporin Z from Flavobacterium johnsoniae (Cytophaga johnsonae).